A 582-amino-acid chain; its full sequence is ATP-dependent lipid A-core flippase (582 aa).

Helical transmembrane passes span 25–45, 64–84, 142–162, 165–185, and 253–273; these read WFMLVISVIGYALYAGAQAGA, VLIVSIAPLVLVLFQGLGQFM, AIIVIIREGLTVIGLFSFLLW, WKLTLILVTVVPLIALVMNIT, and VIVQLFVAVGIGFITYLYIHL. The 281-residue stretch at 29-309 folds into the ABC transmembrane type-1 domain; the sequence is VISVIGYALY…LTDVNVKVQR (281 aa). An ABC transporter domain is found at 342 to 577; it reads IDFEGVSFGY…NGLYTQMYRM (236 aa). ATP is bound at residue 375 to 382; sequence GRSGAGKS.

It belongs to the ABC transporter superfamily. Lipid exporter (TC 3.A.1.106) family. As to quaternary structure, homodimer.

The protein resides in the cell inner membrane. The catalysed reaction is ATP + H2O + lipid A-core oligosaccharideSide 1 = ADP + phosphate + lipid A-core oligosaccharideSide 2.. Involved in lipopolysaccharide (LPS) biosynthesis. Translocates lipid A-core from the inner to the outer leaflet of the inner membrane. Transmembrane domains (TMD) form a pore in the inner membrane and the ATP-binding domain (NBD) is responsible for energy generation. The chain is ATP-dependent lipid A-core flippase from Alcanivorax borkumensis (strain ATCC 700651 / DSM 11573 / NCIMB 13689 / SK2).